Consider the following 21-residue polypeptide: Peptide PGLa-R3 (21 aa).

Leu21 bears the Leucine amide mark.

In terms of tissue distribution, expressed by the skin glands.

It is found in the secreted. Functionally, antimicrobial peptide. This Xenopus ruwenzoriensis (Uganda clawed frog) protein is Peptide PGLa-R3.